Reading from the N-terminus, the 135-residue chain is Small ribosomal subunit protein bS16m (135 aa).

The N-terminal 34 residues, 1-34 (MVQLTTVLCKAYRGGHLTIRLALGGCTNRPFYRI), are a transit peptide targeting the mitochondrion. Threonine 130 is subject to Phosphothreonine.

It belongs to the bacterial ribosomal protein bS16 family. In terms of assembly, component of the mitochondrial ribosome small subunit (28S) which comprises a 12S rRNA and about 30 distinct proteins.

It is found in the mitochondrion. In Bos taurus (Bovine), this protein is Small ribosomal subunit protein bS16m (MRPS16).